A 114-amino-acid chain; its full sequence is MNIYDKVHELANELKECEEVKNFKKYKKAVEAKESSKKMVEDFRKVQLQAYSEQMEKGAASQETMEKLENIGKIISMDLDVSNYMQAEVKFGVLWEDIIKILGKAVDDDFVDHK.

It belongs to the UPF0342 family.

This Clostridium novyi (strain NT) protein is UPF0342 protein NT01CX_2274.